We begin with the raw amino-acid sequence, 185 residues long: Ribosome-recycling factor (185 aa).

The protein belongs to the RRF family.

It is found in the cytoplasm. Functionally, responsible for the release of ribosomes from messenger RNA at the termination of protein biosynthesis. May increase the efficiency of translation by recycling ribosomes from one round of translation to another. This Campylobacter jejuni subsp. jejuni serotype O:23/36 (strain 81-176) protein is Ribosome-recycling factor.